Here is a 219-residue protein sequence, read N- to C-terminus: Elongation factor Ts (219 aa).

Positions T82–V85 are involved in Mg(2+) ion dislocation from EF-Tu.

It belongs to the EF-Ts family.

Its subcellular location is the cytoplasm. Associates with the EF-Tu.GDP complex and induces the exchange of GDP to GTP. It remains bound to the aminoacyl-tRNA.EF-Tu.GTP complex up to the GTP hydrolysis stage on the ribosome. This is Elongation factor Ts from Anaeromyxobacter sp. (strain Fw109-5).